The following is a 417-amino-acid chain: Tyrosine--tRNA ligase (417 aa).

Residue Tyr39 coordinates L-tyrosine. Positions 44–53 (PTAPSLHAGG) match the 'HIGH' region motif. 2 residues coordinate L-tyrosine: Tyr176 and Gln180. Positions 236–240 (KMGKS) match the 'KMSKS' region motif. An ATP-binding site is contributed by Lys239. Residues 350–417 (IGVLALMVLA…KKRHVLIRPA (68 aa)) form the S4 RNA-binding domain.

It belongs to the class-I aminoacyl-tRNA synthetase family. TyrS type 1 subfamily. In terms of assembly, homodimer.

The protein resides in the cytoplasm. The catalysed reaction is tRNA(Tyr) + L-tyrosine + ATP = L-tyrosyl-tRNA(Tyr) + AMP + diphosphate + H(+). Its function is as follows. Catalyzes the attachment of tyrosine to tRNA(Tyr) in a two-step reaction: tyrosine is first activated by ATP to form Tyr-AMP and then transferred to the acceptor end of tRNA(Tyr). This Brucella suis biovar 1 (strain 1330) protein is Tyrosine--tRNA ligase.